The primary structure comprises 205 residues: Small ribosomal subunit protein uS4 (205 aa).

Residues 20 to 46 form a disordered region; sequence WGRSKSPVNRREYGPGQHGQRRKGKLS. One can recognise an S4 RNA-binding domain in the interval 94 to 157; the sequence is RRLDAVVYRA…RQLTLVLEAS (64 aa).

The protein belongs to the universal ribosomal protein uS4 family. Part of the 30S ribosomal subunit. Contacts protein S5. The interaction surface between S4 and S5 is involved in control of translational fidelity.

Functionally, one of the primary rRNA binding proteins, it binds directly to 16S rRNA where it nucleates assembly of the body of the 30S subunit. With S5 and S12 plays an important role in translational accuracy. This chain is Small ribosomal subunit protein uS4, found in Beijerinckia indica subsp. indica (strain ATCC 9039 / DSM 1715 / NCIMB 8712).